We begin with the raw amino-acid sequence, 450 residues long: Phosphoglucosamine mutase (450 aa).

The active-site Phosphoserine intermediate is the Ser101. The Mg(2+) site is built by Ser101, Asp242, Asp244, and Asp246. A Phosphoserine modification is found at Ser101.

Belongs to the phosphohexose mutase family. Mg(2+) is required as a cofactor. Post-translationally, activated by phosphorylation.

It catalyses the reaction alpha-D-glucosamine 1-phosphate = D-glucosamine 6-phosphate. In terms of biological role, catalyzes the conversion of glucosamine-6-phosphate to glucosamine-1-phosphate. In Rhodopseudomonas palustris (strain TIE-1), this protein is Phosphoglucosamine mutase.